We begin with the raw amino-acid sequence, 485 residues long: UDP-N-acetylmuramate--L-alanine ligase (485 aa).

120–126 is a binding site for ATP; sequence GSHGKTT.

It belongs to the MurCDEF family.

The protein localises to the cytoplasm. The catalysed reaction is UDP-N-acetyl-alpha-D-muramate + L-alanine + ATP = UDP-N-acetyl-alpha-D-muramoyl-L-alanine + ADP + phosphate + H(+). The protein operates within cell wall biogenesis; peptidoglycan biosynthesis. Cell wall formation. This Rickettsia africae (strain ESF-5) protein is UDP-N-acetylmuramate--L-alanine ligase.